The chain runs to 146 residues: Aspartate carbamoyltransferase regulatory chain (146 aa).

Residues Cys102, Cys107, Cys131, and Cys134 each contribute to the Zn(2+) site.

The protein belongs to the PyrI family. Contains catalytic and regulatory chains. Requires Zn(2+) as cofactor.

Its function is as follows. Involved in allosteric regulation of aspartate carbamoyltransferase. The polypeptide is Aspartate carbamoyltransferase regulatory chain (Clostridium acetobutylicum (strain ATCC 824 / DSM 792 / JCM 1419 / IAM 19013 / LMG 5710 / NBRC 13948 / NRRL B-527 / VKM B-1787 / 2291 / W)).